A 240-amino-acid polypeptide reads, in one-letter code: Pyridoxine 5'-phosphate synthase (240 aa).

Asn7 contacts 3-amino-2-oxopropyl phosphate. 9-10 provides a ligand contact to 1-deoxy-D-xylulose 5-phosphate; that stretch reads DH. Residue Arg18 coordinates 3-amino-2-oxopropyl phosphate. His43 functions as the Proton acceptor in the catalytic mechanism. Arg45 and His50 together coordinate 1-deoxy-D-xylulose 5-phosphate. Glu70 (proton acceptor) is an active-site residue. Thr100 is a binding site for 1-deoxy-D-xylulose 5-phosphate. The Proton donor role is filled by His191. Residues Gly192 and 213–214 each bind 3-amino-2-oxopropyl phosphate; that span reads GH.

Belongs to the PNP synthase family. Homooctamer; tetramer of dimers.

The protein resides in the cytoplasm. The enzyme catalyses 3-amino-2-oxopropyl phosphate + 1-deoxy-D-xylulose 5-phosphate = pyridoxine 5'-phosphate + phosphate + 2 H2O + H(+). The protein operates within cofactor biosynthesis; pyridoxine 5'-phosphate biosynthesis; pyridoxine 5'-phosphate from D-erythrose 4-phosphate: step 5/5. In terms of biological role, catalyzes the complicated ring closure reaction between the two acyclic compounds 1-deoxy-D-xylulose-5-phosphate (DXP) and 3-amino-2-oxopropyl phosphate (1-amino-acetone-3-phosphate or AAP) to form pyridoxine 5'-phosphate (PNP) and inorganic phosphate. The polypeptide is Pyridoxine 5'-phosphate synthase (Crocosphaera subtropica (strain ATCC 51142 / BH68) (Cyanothece sp. (strain ATCC 51142))).